The following is an 85-amino-acid chain: UPF0434 protein HNE_3545 (85 aa).

This sequence belongs to the UPF0434 family.

This Hyphomonas neptunium (strain ATCC 15444) protein is UPF0434 protein HNE_3545.